Here is a 261-residue protein sequence, read N- to C-terminus: Class II histocompatibility antigen, M beta 1 chain (261 aa).

The signal sequence occupies residues 1-18 (MAALWLLLLVLSLHCMGA). Residues 19 to 112 (GGFVAHVEST…PFWNALTHRT (94 aa)) are beta-1. Residues 19–218 (GGFVAHVEST…PGLSPIQTVK (200 aa)) are Lumenal-facing. Cystine bridges form between C29–C97, C43–C53, and C135–C192. N75 is a glycosylation site (N-linked (GlcNAc...) asparagine). The segment at 113 to 207 (RPPSVRVAQT…GTSEPIRGDW (95 aa)) is beta-2. An Ig-like C1-type domain is found at 114–204 (PPSVRVAQTT…QHSGTSEPIR (91 aa)). The segment at 208–218 (TPGLSPIQTVK) is connecting peptide. A helical membrane pass occupies residues 219–239 (VSVSAATLGLGFIIFCVGFFR). The Cytoplasmic portion of the chain corresponds to 240 to 261 (WRKSHSSSYTPLSGSTYPEGRH). The short motif at 248 to 251 (YTPL) is the YXXZ motif element.

This sequence belongs to the MHC class II family. Heterodimer of an alpha chain (DMA) and a beta chain (DMB). Interacts with MHCII; this interaction mediates rapid selection of high-affinity peptides.

The protein resides in the late endosome membrane. The protein localises to the lysosome membrane. Its function is as follows. Plays a critical role in catalyzing the release of class II-associated invariant chain peptide (CLIP) from newly synthesized MHC class II molecules and freeing the peptide binding site for acquisition of antigenic peptides. The polypeptide is Class II histocompatibility antigen, M beta 1 chain (H2-DMb1) (Mus musculus (Mouse)).